The sequence spans 310 residues: Elongation factor Ts (310 aa).

The involved in Mg(2+) ion dislocation from EF-Tu stretch occupies residues 80–83 (TDFV).

The protein belongs to the EF-Ts family.

It is found in the cytoplasm. Its function is as follows. Associates with the EF-Tu.GDP complex and induces the exchange of GDP to GTP. It remains bound to the aminoacyl-tRNA.EF-Tu.GTP complex up to the GTP hydrolysis stage on the ribosome. In Methylocella silvestris (strain DSM 15510 / CIP 108128 / LMG 27833 / NCIMB 13906 / BL2), this protein is Elongation factor Ts.